A 215-amino-acid polypeptide reads, in one-letter code: Adenylate kinase (215 aa).

Residue 10 to 15 (GAGKGT) participates in ATP binding. Residues 30-59 (STGDMLRAAIKAGTPLGLEAKKIIDEGGLV) are NMP. AMP-binding positions include threonine 31, arginine 36, 57 to 59 (GLV), 85 to 88 (GFPR), and glutamine 92. The LID stretch occupies residues 122–159 (GRRVHLASGRTYHVTYNPPKTEGKDDVTGEDLIQRDDD). ATP is bound by residues arginine 123 and 132 to 133 (TY). Arginine 156 and arginine 167 together coordinate AMP. Glutamine 200 is an ATP binding site.

It belongs to the adenylate kinase family. In terms of assembly, monomer.

It is found in the cytoplasm. It catalyses the reaction AMP + ATP = 2 ADP. It functions in the pathway purine metabolism; AMP biosynthesis via salvage pathway; AMP from ADP: step 1/1. Catalyzes the reversible transfer of the terminal phosphate group between ATP and AMP. Plays an important role in cellular energy homeostasis and in adenine nucleotide metabolism. This is Adenylate kinase from Neisseria gonorrhoeae (strain ATCC 700825 / FA 1090).